We begin with the raw amino-acid sequence, 626 residues long: Serine/threonine-protein kinase PknB (626 aa).

Residues 1–332 (MTTPSHLSDR…DRSIGSVGRW (332 aa)) are Cytoplasmic-facing. A Protein kinase domain is found at 11-274 (YELGEILGFG…TAAEMRADLV (264 aa)). Residues 17–25 (LGFGGMSEV), lysine 40, and 93–95 (EYV) contribute to the ATP site. Aspartate 138 functions as the Proton acceptor in the catalytic mechanism. ATP contacts are provided by residues 140-143 (KPAN) and aspartate 156. Positions 143 and 156 each coordinate Mg(2+). Serine 166 and serine 169 each carry phosphoserine; by autocatalysis. Phosphothreonine; by autocatalysis occurs at positions 171, 173, and 294. The residue at position 295 (serine 295) is a Phosphoserine; by autocatalysis. Residues 299–323 (SAAGNLSGPRTDPLPRQDLDDTDRD) form a disordered region. Threonine 309 carries the post-translational modification Phosphothreonine; by autocatalysis. Over residues 311–323 (PLPRQDLDDTDRD) the composition is skewed to basic and acidic residues. Residues 333–353 (VAVVAVLAVLTVVVTIAINTF) traverse the membrane as a helical segment. Residues 354 to 626 (GGITRDVQVP…DGIITLRFGQ (273 aa)) are Extracellular-facing. PASTA domains follow at residues 356 to 422 (ITRD…NVST), 423 to 490 (GPEQ…IVGS), 491 to 557 (GPAT…QVSK), and 558 to 626 (GNQF…RFGQ).

The protein belongs to the protein kinase superfamily. Ser/Thr protein kinase family. As to quaternary structure, homodimer. Autophosphorylated. Dephosphorylated by PstP.

The protein localises to the cell membrane. It carries out the reaction L-seryl-[protein] + ATP = O-phospho-L-seryl-[protein] + ADP + H(+). It catalyses the reaction L-threonyl-[protein] + ATP = O-phospho-L-threonyl-[protein] + ADP + H(+). Its function is as follows. Protein kinase that regulates many aspects of mycobacterial physiology. Is a key component of a signal transduction pathway that regulates cell growth, cell shape and cell division via phosphorylation of target proteins. The sequence is that of Serine/threonine-protein kinase PknB (pknB) from Mycobacterium bovis (strain ATCC BAA-935 / AF2122/97).